The sequence spans 841 residues: Protein translocase subunit SecA (841 aa).

Residues Gln86, 104-108 (GEGKT), and Asp493 each bind ATP. Residues 788-822 (EEVAEGKAVRPSANGQEDKKAKRKPVRKAENIGRN) are disordered. Residues Cys825, Cys827, Cys836, and Cys837 each contribute to the Zn(2+) site.

The protein belongs to the SecA family. In terms of assembly, monomer and homodimer. Part of the essential Sec protein translocation apparatus which comprises SecA, SecYEG and auxiliary proteins SecDF. Other proteins may also be involved. The cofactor is Zn(2+).

The protein resides in the cell membrane. Its subcellular location is the cytoplasm. It catalyses the reaction ATP + H2O + cellular proteinSide 1 = ADP + phosphate + cellular proteinSide 2.. In terms of biological role, part of the Sec protein translocase complex. Interacts with the SecYEG preprotein conducting channel. Has a central role in coupling the hydrolysis of ATP to the transfer of proteins into and across the cell membrane, serving as an ATP-driven molecular motor driving the stepwise translocation of polypeptide chains across the membrane. In Shouchella clausii (strain KSM-K16) (Alkalihalobacillus clausii), this protein is Protein translocase subunit SecA.